Here is a 58-residue protein sequence, read N- to C-terminus: Small ribosomal subunit protein bS21B (58 aa).

Belongs to the bacterial ribosomal protein bS21 family.

This is Small ribosomal subunit protein bS21B from Trichormus variabilis (strain ATCC 29413 / PCC 7937) (Anabaena variabilis).